Here is a 44-residue protein sequence, read N- to C-terminus: uncharacterized protein (44 aa).

This is an uncharacterized protein from Treponema pallidum (strain Nichols).